We begin with the raw amino-acid sequence, 239 residues long: Phospholipase A2 (239 aa).

Positions 1–19 are cleaved as a signal peptide; the sequence is MSLIIVLVISVLSADAVLS. The propeptide occupies 20-105; that stretch reads MDNELYLNLE…GRCLSVGESE (86 aa). Ca(2+) is bound by residues Trp-113, Gly-115, and Gly-117. 5 cysteine pairs are disulfide-bonded: Cys-114-Cys-136, Cys-135-Cys-174, Cys-142-Cys-167, Cys-165-Cys-202, and Cys-207-Cys-217. The active site involves His-139. Asp-140 serves as a coordination point for Ca(2+). The propeptide occupies 211 to 213; the sequence is RSP.

It belongs to the phospholipase A2 family. Group III subfamily. Heterodimer composed of a small subunit and a large subunit; disulfid-linked. Ca(2+) is required as a cofactor. As to expression, expressed by the venom gland.

The protein localises to the secreted. The enzyme catalyses a 1,2-diacyl-sn-glycero-3-phosphocholine + H2O = a 1-acyl-sn-glycero-3-phosphocholine + a fatty acid + H(+). Toxic phospholipase A2, which may catalyze the calcium-dependent hydrolysis of the 2-acyl groups in 3-sn-phosphoglycerides. Inhibits both skeletal (RYR1) and cardiac (RYR2) ryanodine receptors (calcium release channels). Probably blocks ryanodine receptors by generating a lipid product. In Hoffmannihadrurus gertschi (Scorpion), this protein is Phospholipase A2.